A 418-amino-acid polypeptide reads, in one-letter code: Probable mitochondrial adenine nucleotide transporter BTL2 (418 aa).

3 Solcar repeats span residues 122-205, 215-300, and 329-414; these read MNTR…YRKQ, ATNF…LKSS, and LGPI…MKIV. 6 helical membrane passes run 127-147, 180-200, 221-241, 276-296, 335-355, and 383-403; these read HLWA…PLER, GNLL…CAYD, FVAG…LDTI, LVPS…VYDI, LMYG…FEVV, and IPAL…SASI.

The protein belongs to the mitochondrial carrier (TC 2.A.29) family.

It is found in the mitochondrion inner membrane. Its function is as follows. Probable mitochondrial adenylate carrier that catalyzes the transport of ATP, ADP and AMP. In Arabidopsis thaliana (Mouse-ear cress), this protein is Probable mitochondrial adenine nucleotide transporter BTL2.